Consider the following 69-residue polypeptide: Large ribosomal subunit protein bL31 (69 aa).

Residues cysteine 16, cysteine 18, cysteine 36, and cysteine 39 each coordinate Zn(2+).

This sequence belongs to the bacterial ribosomal protein bL31 family. Type A subfamily. In terms of assembly, part of the 50S ribosomal subunit. The cofactor is Zn(2+).

Its function is as follows. Binds the 23S rRNA. This Thermosipho africanus (strain TCF52B) protein is Large ribosomal subunit protein bL31.